The sequence spans 252 residues: Probable 6-phosphogluconolactonase 5 (252 aa).

It belongs to the glucosamine/galactosamine-6-phosphate isomerase family. 6-phosphogluconolactonase subfamily.

The protein resides in the cytoplasm. It localises to the cytosol. The enzyme catalyses 6-phospho-D-glucono-1,5-lactone + H2O = 6-phospho-D-gluconate + H(+). It participates in carbohydrate degradation; pentose phosphate pathway; D-ribulose 5-phosphate from D-glucose 6-phosphate (oxidative stage): step 2/3. Functionally, catalyzes the hydrolysis of 6-phosphogluconolactone to 6-phosphogluconate. This chain is Probable 6-phosphogluconolactonase 5, found in Arabidopsis thaliana (Mouse-ear cress).